A 2595-amino-acid chain; its full sequence is Glucosylceramide transporter ABCA12 (2595 aa).

A helical transmembrane segment spans residues 23–43; sequence PLWTLVLILWPVIIFIILAIT. Asparagine 156, asparagine 174, asparagine 214, asparagine 275, asparagine 333, asparagine 367, asparagine 383, asparagine 412, asparagine 435, asparagine 528, asparagine 543, asparagine 577, asparagine 608, asparagine 623, asparagine 648, asparagine 752, asparagine 826, asparagine 920, and asparagine 963 each carry an N-linked (GlcNAc...) asparagine glycan. 3 consecutive transmembrane segments (helical) span residues 1065 to 1085, 1112 to 1132, and 1145 to 1165; these read VSYSLPIVLMVAWVVFIAAFV, FAWLIESVGFLLVTIVILIII, and FILFLYFSDYSFSVIAMSYLI. Asparagine 1170 carries an N-linked (GlcNAc...) asparagine glycan. Helical transmembrane passes span 1174 to 1194, 1200 to 1220, and 1250 to 1270; these read IAALIGSLIYIIAFFPFIVLV, LSYVLKVFMSLLSPTAFSYAS, and FGWLCCLILADSFIYFLIAWY. Residues 1346–1577 enclose the ABC transporter 1 domain; sequence VALHGVTKIY…FGDGYHLTLT (232 aa). Position 1378 to 1385 (1378 to 1385) interacts with ATP; the sequence is GPNGAGKT. N-linked (GlcNAc...) asparagine glycosylation is found at asparagine 1524, asparagine 1663, and asparagine 1704. A helical membrane pass occupies residues 1747–1767; the sequence is LIAQVILPIVFVTTAMGLGTL. N-linked (GlcNAc...) asparagine glycosylation is found at asparagine 1769, asparagine 1819, asparagine 1835, asparagine 1876, asparagine 1921, and asparagine 1952. Helical transmembrane passes span 1979–1999, 2035–2055, 2072–2092, and 2103–2123; these read ATISSLIDILVALSILMGYSV, FIYDMVFYLVPVAFSIGIIAI, LLLLLFGYATFSWMYLLAGLF, and VCVNLFFGINSIVSLSVVYFL. Residue asparagine 2178 is glycosylated (N-linked (GlcNAc...) asparagine). Residues 2187–2207 form a helical membrane-spanning segment; the sequence is GAMFVALVSQGTMFFSLRLLI. Asparagine 2208 and asparagine 2223 each carry an N-linked (GlcNAc...) asparagine glycan. The region spanning 2254–2489 is the ABC transporter 2 domain; the sequence is VQLYCLTKTY…FGRGFTVKVH (236 aa). Residues 2270 to 2290 traverse the membrane as a helical segment; the sequence is IIAVNNISIGIPAGECFGLLG. 2290–2297 contacts ATP; sequence GVNGAGKT. Residues asparagine 2318, asparagine 2542, and asparagine 2547 are each glycosylated (N-linked (GlcNAc...) asparagine). The disordered stretch occupies residues 2571–2595; the sequence is SYETADTSSQGSTISVDSQDDQMES. Positions 2574–2587 are enriched in polar residues; the sequence is TADTSSQGSTISVD.

Belongs to the ABC transporter superfamily. ABCA family. Interacts with NR1H2 and ABCA1; this interaction is required for ABCA1 localization to the cell surface and is necessary for its normal activity and stability. In terms of tissue distribution, mainly expressed in the stomach, placenta, testis and fetal brain. Expressed in the upper epidermal layers, mainly the granular layers, of skin. Expressed throughout the normal interfollicular epidermis with prominent expression in the stratum granulosum. Expressed in alpha and beta cells of pancreatic islets.

It localises to the cytoplasmic vesicle. It is found in the secretory vesicle membrane. The protein localises to the golgi apparatus membrane. It catalyses the reaction ATP + H2O + phospholipidSide 1 = ADP + phosphate + phospholipidSide 2.. The catalysed reaction is a beta-D-glucosylceramide(in) + ATP + H2O = a beta-D-glucosylceramide(out) + ADP + phosphate + H(+). Its function is as follows. Transports lipids such as glucosylceramides from the outer to the inner leaflet of lamellar granules (LGs) membrane, whereby the lipids are finally transported to the keratinocyte periphery via the trans-Golgi network and LGs and released to the apical surface of the granular keratinocytes to form lipid lamellae in the stratum corneum of the epidermis, which is essential for skin barrier function. In the meantime, participates in the transport of the lamellar granules-associated proteolytic enzymes, in turn regulates desquamation and keratinocyte differentiation. Furthermore, is essential for the regulation of cellular cholesterol homeostasis by regulating ABCA1-dependent cholesterol efflux from macrophages through interaction with NR1H2 and ABCA1. Plays pleiotropic roles in regulating glucose stimulated insulin secretion from beta cells, regulating the morphology and fusion of insulin granules, lipid raft abundance and the actin cytoskeleton. Also involved in lung surfactant biogenesis. The polypeptide is Glucosylceramide transporter ABCA12 (Homo sapiens (Human)).